A 123-amino-acid polypeptide reads, in one-letter code: MEYSTFGKHIIVDLWGVDFSLLDDMYFLEHHLIHAADLSGAHVLNVSTKEFDPHGVTVLVLLSESHLSIHTYPEQNFAAIDCYTCGTTVEPQIAIDYIVSILKPNEMHIRRLIRGIGEIVNTD.

Residue Ser-65 is the Schiff-base intermediate with substrate; via pyruvic acid of the active site. Ser-65 is modified (pyruvic acid (Ser); by autocatalysis). His-70 (proton acceptor; for processing activity) is an active-site residue. Cys-85 acts as the Proton donor; for catalytic activity in catalysis.

The protein belongs to the prokaryotic AdoMetDC family. Type 1 subfamily. In terms of assembly, heterotetramer of two alpha and two beta chains arranged as a dimer of alpha/beta heterodimers. Requires pyruvate as cofactor. Post-translationally, is synthesized initially as an inactive proenzyme. Formation of the active enzyme involves a self-maturation process in which the active site pyruvoyl group is generated from an internal serine residue via an autocatalytic post-translational modification. Two non-identical subunits are generated from the proenzyme in this reaction, and the pyruvate is formed at the N-terminus of the alpha chain, which is derived from the carboxyl end of the proenzyme. The post-translation cleavage follows an unusual pathway, termed non-hydrolytic serinolysis, in which the side chain hydroxyl group of the serine supplies its oxygen atom to form the C-terminus of the beta chain, while the remainder of the serine residue undergoes an oxidative deamination to produce ammonia and the pyruvoyl group blocking the N-terminus of the alpha chain.

The enzyme catalyses S-adenosyl-L-methionine + H(+) = S-adenosyl 3-(methylsulfanyl)propylamine + CO2. Its pathway is amine and polyamine biosynthesis; S-adenosylmethioninamine biosynthesis; S-adenosylmethioninamine from S-adenosyl-L-methionine: step 1/1. Its function is as follows. Catalyzes the decarboxylation of S-adenosylmethionine to S-adenosylmethioninamine (dcAdoMet), the propylamine donor required for the synthesis of the polyamines spermine and spermidine from the diamine putrescine. This is S-adenosylmethionine decarboxylase proenzyme 2 from Bacillus anthracis.